Here is a 189-residue protein sequence, read N- to C-terminus: 3-hydroxyanthranilate 3,4-dioxygenase (189 aa).

R50 serves as a coordination point for O2. H54, E60, and H102 together coordinate Fe cation. E60 contacts substrate. Positions 106 and 116 each coordinate substrate. Residues C131, C136, C170, and C173 each contribute to the a divalent metal cation site.

Belongs to the 3-HAO family. The cofactor is Fe(2+).

It is found in the cytoplasm. The catalysed reaction is 3-hydroxyanthranilate + O2 = (2Z,4Z)-2-amino-3-carboxymuconate 6-semialdehyde. It functions in the pathway cofactor biosynthesis; NAD(+) biosynthesis; quinolinate from L-kynurenine: step 3/3. Its function is as follows. Catalyzes the oxidative ring opening of 3-hydroxyanthranilate to 2-amino-3-carboxymuconate semialdehyde, which spontaneously cyclizes to quinolinate. This Aspergillus niger (strain ATCC MYA-4892 / CBS 513.88 / FGSC A1513) protein is 3-hydroxyanthranilate 3,4-dioxygenase (bna1).